The following is a 401-amino-acid chain: Argininosuccinate synthase (401 aa).

An ATP-binding site is contributed by 9 to 17 (AYSGGLDTS). Residue Y86 coordinates L-citrulline. An ATP-binding site is contributed by G116. Residues T118, N122, and D123 each coordinate L-aspartate. Residue N122 participates in L-citrulline binding. Residues R126, S174, S183, E259, and Y271 each contribute to the L-citrulline site.

It belongs to the argininosuccinate synthase family. Type 1 subfamily. Homotetramer.

The protein localises to the cytoplasm. The catalysed reaction is L-citrulline + L-aspartate + ATP = 2-(N(omega)-L-arginino)succinate + AMP + diphosphate + H(+). It participates in amino-acid biosynthesis; L-arginine biosynthesis; L-arginine from L-ornithine and carbamoyl phosphate: step 2/3. The sequence is that of Argininosuccinate synthase from Bacillus thuringiensis (strain Al Hakam).